The following is a 254-amino-acid chain: 3-deoxy-manno-octulosonate cytidylyltransferase (254 aa).

Belongs to the KdsB family.

The protein resides in the cytoplasm. The catalysed reaction is 3-deoxy-alpha-D-manno-oct-2-ulosonate + CTP = CMP-3-deoxy-beta-D-manno-octulosonate + diphosphate. Its pathway is nucleotide-sugar biosynthesis; CMP-3-deoxy-D-manno-octulosonate biosynthesis; CMP-3-deoxy-D-manno-octulosonate from 3-deoxy-D-manno-octulosonate and CTP: step 1/1. It participates in bacterial outer membrane biogenesis; lipopolysaccharide biosynthesis. Activates KDO (a required 8-carbon sugar) for incorporation into bacterial lipopolysaccharide in Gram-negative bacteria. In Pseudomonas putida (strain GB-1), this protein is 3-deoxy-manno-octulosonate cytidylyltransferase.